Consider the following 173-residue polypeptide: Archaemetzincin (173 aa).

His130 lines the Zn(2+) pocket. Glu131 (proton acceptor) is an active-site residue. Residues His134, His140, Cys141, Cys146, Cys165, and Cys168 each contribute to the Zn(2+) site.

Belongs to the peptidase M54 family. Monomer. Zn(2+) serves as cofactor.

Its function is as follows. Probable zinc metalloprotease whose natural substrate is unknown. The polypeptide is Archaemetzincin (Natronomonas pharaonis (strain ATCC 35678 / DSM 2160 / CIP 103997 / JCM 8858 / NBRC 14720 / NCIMB 2260 / Gabara) (Halobacterium pharaonis)).